Consider the following 262-residue polypeptide: Matrilysin (262 aa).

The first 12 residues, 1–12 (LCVLCLLPQSPA), serve as a signal peptide directing secretion. Positions 13–89 (LPLPREAGGH…PRCGLPDTGE (77 aa)) are cleaved as a propeptide — activation peptide. Positions 80–87 (PRCGLPDT) match the Cysteine switch motif. Zn(2+) is bound at residue cysteine 82. Aspartate 148 provides a ligand contact to Ca(2+). Zn(2+) contacts are provided by histidine 158 and aspartate 160. Ca(2+) contacts are provided by aspartate 165, glycine 166, glycine 168, and threonine 170. Histidine 173 lines the Zn(2+) pocket. Positions 180, 182, and 184 each coordinate Ca(2+). Residue histidine 186 participates in Zn(2+) binding. Residues aspartate 188 and glutamate 191 each coordinate Ca(2+). Histidine 209 provides a ligand contact to Zn(2+). Glutamate 210 is a catalytic residue. Zn(2+)-binding residues include histidine 213 and histidine 219.

This sequence belongs to the peptidase M10A family. Ca(2+) is required as a cofactor. Zn(2+) serves as cofactor.

The protein localises to the secreted. It localises to the extracellular space. The protein resides in the extracellular matrix. The catalysed reaction is Cleavage of 14-Ala-|-Leu-15 and 16-Tyr-|-Leu-17 in B chain of insulin. No action on collagen types I, II, IV, V. Cleaves gelatin chain alpha2(I) &gt; alpha1(I).. Functionally, degrades casein, gelatins of types I, III, IV, and V, and fibronectin. Activates procollagenase. The protein is Matrilysin (MMP7) of Felis catus (Cat).